Here is a 204-residue protein sequence, read N- to C-terminus: uncharacterized protein (204 aa).

2 disordered regions span residues 1–37 (MRALPGAGTVCDTAGVTERSRENRHPTGRGPRAGSVS) and 159–204 (GYRP…DGEL). Low complexity predominate over residues 28–37 (GRGPRAGSVS). The WGR domain occupies 88-175 (PYRLYVERLD…LPKEKWPAEA (88 aa)). Composition is skewed to basic and acidic residues over residues 166–179 (LPKEKWPAEAEHES) and 188–204 (PEGHLDLDEERNLDGEL).

This is an uncharacterized protein from Sinorhizobium fredii (strain NBRC 101917 / NGR234).